Here is a 496-residue protein sequence, read N- to C-terminus: Cytochrome P450 71D18 (496 aa).

Residues 2–22 traverse the membrane as a helical; Signal-anchor for type II membrane protein segment; the sequence is ELDLLSAIIILVATYIVSLLI. Cys-436 contacts heme.

This sequence belongs to the cytochrome P450 family. The cofactor is heme.

Its subcellular location is the endoplasmic reticulum membrane. It carries out the reaction (4S)-limonene + reduced [NADPH--hemoprotein reductase] + O2 = (1S,5R)-carveol + oxidized [NADPH--hemoprotein reductase] + H2O + H(+). In terms of biological role, hydroxylates (-)-(4S)-limonene to (-)-trans-carveol, a precursor of (-)-carvone. Fluorinated substrate analogs are hydroxylated with the same regio- and stereochemistry. The sequence is that of Cytochrome P450 71D18 (CYP71D18) from Mentha gracilis (Gingermint).